We begin with the raw amino-acid sequence, 626 residues long: Chaperone protein HtpG (626 aa).

The interval 1-339 is a; substrate-binding; it reads MSQNQETRGF…SNDLPLNVSR (339 aa). The tract at residues 340-555 is b; sequence EILQDNKITA…NDQMTTQMAK (216 aa). The segment at 556-626 is c; the sequence is LFAAAGQPVP…FIKRINKLLG (71 aa).

The protein belongs to the heat shock protein 90 family. As to quaternary structure, homodimer.

The protein resides in the cytoplasm. Its function is as follows. Molecular chaperone. Has ATPase activity. This Haemophilus influenzae (strain PittEE) protein is Chaperone protein HtpG.